Here is a 71-residue protein sequence, read N- to C-terminus: Small ribosomal subunit protein bS21 (71 aa).

The span at 48–60 shows a compositional bias: basic residues; the sequence is KKAAAVKRYKKKL. The tract at residues 48-71 is disordered; the sequence is KKAAAVKRYKKKLQRESIRTTRMY. Over residues 61–71 the composition is skewed to basic and acidic residues; sequence QRESIRTTRMY.

Belongs to the bacterial ribosomal protein bS21 family.

This Psychrobacter sp. (strain PRwf-1) protein is Small ribosomal subunit protein bS21.